The primary structure comprises 458 residues: Putative long chain fatty acid-CoA ligase VraA (458 aa).

This sequence belongs to the ATP-dependent AMP-binding enzyme family.

This is Putative long chain fatty acid-CoA ligase VraA (vraA) from Staphylococcus aureus (strain MRSA252).